An 86-amino-acid chain; its full sequence is Putative membrane protein insertion efficiency factor (86 aa).

Belongs to the UPF0161 family.

The protein resides in the cell inner membrane. Could be involved in insertion of integral membrane proteins into the membrane. The sequence is that of Putative membrane protein insertion efficiency factor from Pseudomonas aeruginosa (strain UCBPP-PA14).